A 304-amino-acid polypeptide reads, in one-letter code: tRNA pseudouridine synthase B (304 aa).

D38 (nucleophile) is an active-site residue.

Belongs to the pseudouridine synthase TruB family. Type 1 subfamily.

The catalysed reaction is uridine(55) in tRNA = pseudouridine(55) in tRNA. Its function is as follows. Responsible for synthesis of pseudouridine from uracil-55 in the psi GC loop of transfer RNAs. The polypeptide is tRNA pseudouridine synthase B (Listeria welshimeri serovar 6b (strain ATCC 35897 / DSM 20650 / CCUG 15529 / CIP 8149 / NCTC 11857 / SLCC 5334 / V8)).